A 1315-amino-acid chain; its full sequence is ESX secretion system protein EccC (1315 aa).

The segment covering 1-11 has biased composition (basic residues); the sequence is MSTVLVRRKER. A disordered region spans residues 1–21; that stretch reads MSTVLVRRKERRQPPQMPRGE. The Cytoplasmic segment spans residues 1 to 40; it reads MSTVLVRRKERRQPPQMPRGEILLESPPELPEVVTNSFQN. A helical transmembrane segment spans residues 41 to 61; sequence VLMYLPMAAGSAAMVFTFLNH. The Extracellular segment spans residues 62 to 64; that stretch reads RNT. The chain crosses the membrane as a helical span at residues 65-85; that stretch reads LQLVAGGMFALSMFGMMFGQL. Residues 86-1315 lie on the Cytoplasmic side of the membrane; the sequence is SQQSGERKTK…RLIQTAYRES (1230 aa). 2 consecutive FtsK domains span residues 456 to 656 and 813 to 1004; these read GRPL…MESR and RDPY…YESE. An ATP-binding site is contributed by 479–486; sequence GATGSGKS. The active site involves E593. The interval 721 to 1315 is binds EsxB; the sequence is RPQVVEQPQP…RLIQTAYRES (595 aa). ATP-binding positions include 834 to 839, T1031, 1119 to 1124, Q1293, and 1310 to 1311; these read QTGKST, ECGKSN, and TA. A FtsK 3 domain is found at 1099–1282; it reads LSPVYLDFNT…MSGNKDEGIL (184 aa).

The cytosolic domain can form homodimers. Binds EsxB, which leads to multimerization, however EsxA disassembles the multimers, possibly by making EccC-EsxA-EsxB trimers instead of EccC-EsxB-EsxB-EccC tetramers. Forms a complex with EsxA and EsxB, probably wholly mediated by EsxB.

The protein resides in the cell membrane. EsxB binding to the third FtsK domain causes multimerization; a subsequent unknown step relieves the allosteric inhibition of linker 2 on FtsK domain 1, activating the ATPase activity; a mutant EsxB ('Ala-98') does not cause multimers to form. Its function is as follows. Part of the ESX specialized secretion system, which exports proteins from the cell including EsxA (ESAT-6) and EsxB (CFP-10). Has weak intrinsic ATPase activity; probably only the first FtsK domain can hydrolyze ATP. Might be the translocase subunit. The protein is ESX secretion system protein EccC of Thermomonospora curvata (strain ATCC 19995 / DSM 43183 / JCM 3096 / KCTC 9072 / NBRC 15933 / NCIMB 10081 / Henssen B9).